The following is a 152-amino-acid chain: Large ribosomal subunit protein bL9 (152 aa).

The protein belongs to the bacterial ribosomal protein bL9 family.

Its function is as follows. Binds to the 23S rRNA. This Prochlorococcus marinus (strain NATL2A) protein is Large ribosomal subunit protein bL9.